A 287-amino-acid polypeptide reads, in one-letter code: ATP synthase gamma chain (287 aa).

The protein belongs to the ATPase gamma chain family. F-type ATPases have 2 components, CF(1) - the catalytic core - and CF(0) - the membrane proton channel. CF(1) has five subunits: alpha(3), beta(3), gamma(1), delta(1), epsilon(1). CF(0) has three main subunits: a, b and c.

The protein localises to the cell inner membrane. In terms of biological role, produces ATP from ADP in the presence of a proton gradient across the membrane. The gamma chain is believed to be important in regulating ATPase activity and the flow of protons through the CF(0) complex. The polypeptide is ATP synthase gamma chain (Shigella sonnei (strain Ss046)).